Here is a 240-residue protein sequence, read N- to C-terminus: uncharacterized protein (240 aa).

A disordered region spans residues 216–240 (MKQSKNKPRIRQAVGATRQCRKPQA).

This is an uncharacterized protein from Escherichia coli (strain K12).